The chain runs to 119 residues: Large ribosomal subunit protein bL20 (119 aa).

Belongs to the bacterial ribosomal protein bL20 family.

Functionally, binds directly to 23S ribosomal RNA and is necessary for the in vitro assembly process of the 50S ribosomal subunit. It is not involved in the protein synthesizing functions of that subunit. The chain is Large ribosomal subunit protein bL20 from Burkholderia ambifaria (strain MC40-6).